The sequence spans 283 residues: Elongation factor Ts (283 aa).

An involved in Mg(2+) ion dislocation from EF-Tu region spans residues 80–83 (TDFV).

It belongs to the EF-Ts family.

It is found in the cytoplasm. Associates with the EF-Tu.GDP complex and induces the exchange of GDP to GTP. It remains bound to the aminoacyl-tRNA.EF-Tu.GTP complex up to the GTP hydrolysis stage on the ribosome. The chain is Elongation factor Ts from Haemophilus ducreyi (strain 35000HP / ATCC 700724).